The sequence spans 120 residues: Glycine cleavage system H protein (120 aa).

The region spanning 17–99 (VATVGITNYA…QGAGWFFKLK (83 aa)) is the Lipoyl-binding domain. K58 is modified (N6-lipoyllysine).

Belongs to the GcvH family. In terms of assembly, the glycine cleavage system is composed of four proteins: P, T, L and H. (R)-lipoate serves as cofactor.

Functionally, the glycine cleavage system catalyzes the degradation of glycine. The H protein shuttles the methylamine group of glycine from the P protein to the T protein. The sequence is that of Glycine cleavage system H protein from Rhizobium leguminosarum bv. trifolii (strain WSM2304).